The following is a 1759-amino-acid chain: MSRLSLLGLTAAVVLLSSFCQDRIHVDAAAACKGCAPPCVCPGTKGERGNPGFGGEPGHPGAPGQDGPEGAPGAPGMFGAEGDFGDMGSKGARGDRGLPGSPGHPGLQGLDGLPGLKGEEGIPGCNGTDGFPGMPGLAGPPGQSGQNGNPGRPGLSGPPGEGGVNSQGRKGVKGESGRSGVPGLPGNSGYPGLKGAKGDPGPYGLPGFPGVSGLKGRMGVRTSGVKGEKGLPGPPGPPGQPGSYPWASKPIEMEVLQGPVGPAGVKGEKGRDGPVGPPGMLGLDGPPGYPGLKGQKGDLGDAGQRGKRGKDGVPGNYGEKGSQGEQGLGGTPGYPGTKGGAGEPGYPGRPGFEGDCGPEGPLGEGTGEAGPHGAQGFDGVQGGKGLPGHDGLPGPVGPRGPVGAPGAPGQPGIDGMPGYTEKGDRGEDGYPGFAGEPGLPGEPGDCGYPGEDGLPGYDIQGPPGLDGQSGRDGFPGIPGDIGDPGYSGEKGFPGTGVNKVGPPGMTGLPGEPGMPGRIGVDGYPGPPGNNGERGEDCGYCPDGVPGNAGDPGFPGMNGYPGPPGPNGDHGDCGMPGAPGKPGSAGSDGLSGSPGLPGIPGYPGMKGEAGEIVGPMENPAGIPGLKGDHGLPGLPGRPGSDGLPGYPGGPGQNGFPGLQGEPGLAGIDGKRGRQGSLGIPGLQGPPGDSFPGQPGTPGYKGERGADGLPGLPGAQGPRGIPAPLRIVNQVAGQPGVDGMPGLPGDRGADGLPGLPGPVGPDGYPGTPGERGMDGLPGFPGLHGEPGMRGQQGEVGFNGIDGDCGEPGLDGYPGAPGAPGAPGETGFGFPGQVGYPGPNGDAGAAGLPGPDGYPGRDGLPGTPGYPGEAGMNGQDGAPGQPGSRGESGLVGIDGKKGRDGTPGTRGQDGGPGYSGEAGAPGQNGMDGYPGAPGDQGYPGSPGQDGYPGPSGIPGEDGLVGFPGLRGEHGDNGLPGLEGECGEEGSRGLDGVPGYPGEHGTDGLPGLPGADGQPGFVGEAGEPGTPGYRGQPGEPGNLAYPGQPGDVGYPGPDGPPGLPGQDGLPGLNGERGDNGDSYPGNPGLSGQPGDAGYDGLDGVPGPPGYPGITGMPGLKGESGLPGLPGRQGNDGIPGQPGLEGECGEDGFPGSPGQPGYPGQQGREGEKGYPGIPGENGLPGLRGQDGQPGLKGENGLDGQPGYPGSAGQLGTPGDVGYPGAPGENGDNGNQGRDGQPGLRGESGQPGQPGLPGRDGQPGPVGPPGDDGYPGAPGQDIYGPPGQAGQDGYPGLDGLPGAPGLNGEPGSPGQYGMPGLPGGPGESGLPGYPGERGLPGLDGKRGHDGLPGAPGVPGVEGVPGLEGDCGEDGYPGAPGAPGSNGYPGERGLPGVPGQQGRSGDNGYPGAPGQPGIKGPRGDDGFPGRDGLDGLPGRPGREGLPGPMAMAVRNPPGQPGENGYPGEKGYPGLPGDNGLSGPPGKAGYPGAPGTDGYPGPPGLSGMPGHGGDQGFQGAAGRTGNPGLPGTPGYPGSPGGWAPSRGFTFAKHSQTTAVPQCPPGASQLWEGYSLLYVQGNGRASGQDLGQPGSCLSKFNTMPFMFCNMNSVCHVSSRNDYSFWLSTDEPMTPMMNPVTGTAIRPYISRCAVCEVPTQIIAVHSQDTSVPQCPQGWSGMWTGYSFVMHTAAGAEGTGQSLQSPGSCLEEFRAVPFIECHGRGTCNYYATNHGFWLSIVDQDKQFRKPMSQTLKAGGLKDRVSRCQVCLKNR.

Positions 1–20 (MSRLSLLGLTAAVVLLSSFC) are cleaved as a signal peptide. Positions 21 to 194 (QDRIHVDAAA…PGNSGYPGLK (174 aa)) are cleaved as a propeptide — N-terminal propeptide (7S domain). 6 disordered regions span residues 51–245 (PGFG…GSYP), 269–415 (KGRD…GIDG), 548–596 (AGDP…PGLP), 618–650 (PAGIPGLKGDHGLPGLPGRPGSDGLPGYPGGPG), 666–720 (IDGK…RGIP), and 787–1522 (RGQQ…GTPG). Low complexity-rich tracts occupy residues 104–116 (HPGLQGLDGLPGL), 140–153 (PPGQSGQNGNPGRP), and 278–293 (PGMLGLDGPPGYPGLK). The segment at 195–1530 (GAKGDPGPYG…PGYPGSPGGW (1336 aa)) is triple-helical region. Gly residues-rich tracts occupy residues 324 to 345 (GEQGLGGTPGYPGTKGGAGEPG), 360 to 370 (GPLGEGTGEAG), and 379 to 388 (GVQGGKGLPG). Composition is skewed to low complexity over residues 399–411 (RGPVGAPGAPGQP) and 574–595 (MPGAPGKPGSAGSDGLSGSPGL). A compositionally biased stretch (low complexity) spans 833 to 848 (YPGPNGDAGAAGLPGP). A compositionally biased stretch (gly residues) spans 904–913 (GQDGGPGYSG). Low complexity-rich tracts occupy residues 1037 to 1047 (YPGQPGDVGYP), 1219 to 1232 (ENGDNGNQGRDGQP), 1247 to 1271 (PGRDGQPGPVGPPGDDGYPGAPGQD), and 1281 to 1309 (QDGYPGLDGLPGAPGLNGEPGSPGQYGMP). Residues 1310 to 1319 (GLPGGPGESG) are compositionally biased toward gly residues. Low complexity predominate over residues 1341–1357 (LPGAPGVPGVEGVPGLE). Basic and acidic residues predominate over residues 1410–1422 (PRGDDGFPGRDGL). 2 stretches are compositionally biased toward low complexity: residues 1423–1437 (DGLPGRPGREGLPGP) and 1472–1482 (PPGKAGYPGAP). The segment covering 1495 to 1504 (GMPGHGGDQG) has biased composition (gly residues). Residues 1535–1759 (GFTFAKHSQT…SRCQVCLKNR (225 aa)) form the Collagen IV NC1 domain. 6 disulfides stabilise this stretch: Cys1550–Cys1641, Cys1583–Cys1638, Cys1595–Cys1601, Cys1660–Cys1755, Cys1694–Cys1752, and Cys1706–Cys1712. Met1623 is covalently cross-linked (S-Lysyl-methionine sulfilimine (Met-Lys) (interchain with K-1741)). Lys1741 participates in a covalent cross-link: S-Lysyl-methionine sulfilimine (Lys-Met) (interchain with M-1623).

It belongs to the type IV collagen family. In terms of assembly, trimers of two alpha 1(IV) and one alpha 2(IV) chain. Type IV collagen forms a mesh-like network linked through intermolecular interactions between 7S domains and between NC1 domains. Prolines at the third position of the tripeptide repeating unit (G-X-Y) are hydroxylated in some or all of the chains. Post-translationally, type IV collagens contain numerous cysteine residues which are involved in inter- and intramolecular disulfide bonding. 12 of these, located in the NC1 domain, are conserved in all known type IV collagens. In terms of processing, the trimeric structure of the NC1 domains is stabilized by covalent bonds between Lys and Met residues.

The protein resides in the secreted. It is found in the extracellular space. Its subcellular location is the extracellular matrix. The protein localises to the basement membrane. In terms of biological role, collagen type IV is specific for basement membranes. Required to restrict presynaptic growth at the neuromuscular junctions (NMJ) in late larval stage and in adult motor neurons. May play a role in axon regeneration in embryos following injury in D-type motor neurons. The chain is Collagen alpha-1(IV) chain from Caenorhabditis elegans.